The chain runs to 342 residues: tRNA(Ile)-lysidine synthase (342 aa).

Residue 31–36 (SGGQDS) participates in ATP binding.

It belongs to the tRNA(Ile)-lysidine synthase family.

It is found in the cytoplasm. It catalyses the reaction cytidine(34) in tRNA(Ile2) + L-lysine + ATP = lysidine(34) in tRNA(Ile2) + AMP + diphosphate + H(+). In terms of biological role, ligates lysine onto the cytidine present at position 34 of the AUA codon-specific tRNA(Ile) that contains the anticodon CAU, in an ATP-dependent manner. Cytidine is converted to lysidine, thus changing the amino acid specificity of the tRNA from methionine to isoleucine. This Nostoc sp. (strain PCC 7120 / SAG 25.82 / UTEX 2576) protein is tRNA(Ile)-lysidine synthase.